The following is a 349-amino-acid chain: MSKMPEEEEFYLFKNISSVGPWDGPQYHIAPVWAFQLQAAFMGIVFLAGLPLNSMVLVATVRYKKLRHPLNYVLVNVSVGGFLLCIFSVLPVFVNSCNGYFVFGRHVCALEGFLGTVAGLVTGWSLAFLAFERYIVICKPFGNFRFSSKHALMVVLTTWTIGIGVSIPPFFGWSRYIAEGLQCSCGPDWYTVGTKYRSEYYTWFLFIFCFIVPLSLICFSYAQLLRALKAVAAQQQESATTQKAEREVSRMVVVMVGSFCVCYVPYAALAMYMVNNRNHGLDLRLVSIPAFFSKSSCIYNPIIYCFMNKQFRACIMEMVCGKAMTDESDISSSQKTEVSTVSSSQVGPN.

Topologically, residues 1 to 34 (MSKMPEEEEFYLFKNISSVGPWDGPQYHIAPVWA) are extracellular. N-linked (GlcNAc...) asparagine glycosylation is present at N15. A helical transmembrane segment spans residues 35–59 (FQLQAAFMGIVFLAGLPLNSMVLVA). Residues 60 to 71 (TVRYKKLRHPLN) are Cytoplasmic-facing. The chain crosses the membrane as a helical span at residues 72–97 (YVLVNVSVGGFLLCIFSVLPVFVNSC). The Extracellular segment spans residues 98 to 111 (NGYFVFGRHVCALE). C108 and C185 are disulfide-bonded. The chain crosses the membrane as a helical span at residues 112 to 131 (GFLGTVAGLVTGWSLAFLAF). Residues 132–150 (ERYIVICKPFGNFRFSSKH) are Cytoplasmic-facing. The helical transmembrane segment at 151-174 (ALMVVLTTWTIGIGVSIPPFFGWS) threads the bilayer. The Extracellular segment spans residues 175 to 200 (RYIAEGLQCSCGPDWYTVGTKYRSEY). Residues 201–228 (YTWFLFIFCFIVPLSLICFSYAQLLRAL) traverse the membrane as a helical segment. Topologically, residues 229–250 (KAVAAQQQESATTQKAEREVSR) are cytoplasmic. The helical transmembrane segment at 251 to 274 (MVVVMVGSFCVCYVPYAALAMYMV) threads the bilayer. The Extracellular segment spans residues 275–282 (NNRNHGLD). The helical transmembrane segment at 283 to 307 (LRLVSIPAFFSKSSCIYNPIIYCFM) threads the bilayer. K294 carries the N6-(retinylidene)lysine modification. The Cytoplasmic portion of the chain corresponds to 308-349 (NKQFRACIMEMVCGKAMTDESDISSSQKTEVSTVSSSQVGPN).

This sequence belongs to the G-protein coupled receptor 1 family. Opsin subfamily. Phosphorylated on some or all of the serine and threonine residues present in the C-terminal region.

It localises to the cell membrane. The protein localises to the photoreceptor inner segment. Its subcellular location is the cell projection. The protein resides in the cilium. It is found in the photoreceptor outer segment. It localises to the cytoplasm. The protein localises to the perinuclear region. Its function is as follows. Visual pigments are the light-absorbing molecules that mediate vision. They consist of an apoprotein, opsin, covalently linked to cis-retinal. Required for the maintenance of cone outer segment organization in the ventral retina, but not essential for the maintenance of functioning cone photoreceptors. Involved in ensuring correct abundance and localization of retinal membrane proteins. May increase spectral sensitivity in dim light. In Saimiri boliviensis boliviensis (Bolivian squirrel monkey), this protein is Short-wave-sensitive opsin 1 (OPN1SW).